A 258-amino-acid polypeptide reads, in one-letter code: Acetylglutamate kinase (258 aa).

Substrate-binding positions include 44-45 (GG), R66, and N158. Residues 181–186 (DVSGIL) and 209–211 (IIT) contribute to the ATP site.

This sequence belongs to the acetylglutamate kinase family. ArgB subfamily. In terms of assembly, homodimer.

The protein resides in the cytoplasm. The enzyme catalyses N-acetyl-L-glutamate + ATP = N-acetyl-L-glutamyl 5-phosphate + ADP. It functions in the pathway amino-acid biosynthesis; L-arginine biosynthesis; N(2)-acetyl-L-ornithine from L-glutamate: step 2/4. Its function is as follows. Catalyzes the ATP-dependent phosphorylation of N-acetyl-L-glutamate. This is Acetylglutamate kinase from Shigella flexneri.